A 475-amino-acid chain; its full sequence is Argininosuccinate lyase (475 aa).

It belongs to the lyase 1 family. Argininosuccinate lyase subfamily.

It is found in the cytoplasm. It catalyses the reaction 2-(N(omega)-L-arginino)succinate = fumarate + L-arginine. It functions in the pathway amino-acid biosynthesis; L-arginine biosynthesis; L-arginine from L-ornithine and carbamoyl phosphate: step 3/3. This chain is Argininosuccinate lyase, found in Leifsonia xyli subsp. xyli (strain CTCB07).